The following is a 165-amino-acid chain: Protein SprT (165 aa).

Positions 22–163 constitute a SprT-like domain; sequence LAQANLKLGC…RCVHCGEQLV (142 aa). Residue H78 coordinates Zn(2+). E79 is a catalytic residue. H82 contributes to the Zn(2+) binding site.

This sequence belongs to the SprT family. Zn(2+) serves as cofactor.

Its subcellular location is the cytoplasm. This chain is Protein SprT, found in Shigella dysenteriae serotype 1 (strain Sd197).